Here is a 191-residue protein sequence, read N- to C-terminus: Large ribosomal subunit protein bL25 (191 aa).

The protein belongs to the bacterial ribosomal protein bL25 family. CTC subfamily. Part of the 50S ribosomal subunit; part of the 5S rRNA/L5/L18/L25 subcomplex. Contacts the 5S rRNA. Binds to the 5S rRNA independently of L5 and L18.

This is one of the proteins that binds to the 5S RNA in the ribosome where it forms part of the central protuberance. The protein is Large ribosomal subunit protein bL25 of Nitratidesulfovibrio vulgaris (strain DSM 19637 / Miyazaki F) (Desulfovibrio vulgaris).